Reading from the N-terminus, the 489-residue chain is Cytochrome P450 2C41 (489 aa).

Cys-434 contributes to the heme binding site.

It belongs to the cytochrome P450 family. It depends on heme as a cofactor.

The protein localises to the endoplasmic reticulum membrane. The protein resides in the microsome membrane. The enzyme catalyses an organic molecule + reduced [NADPH--hemoprotein reductase] + O2 = an alcohol + oxidized [NADPH--hemoprotein reductase] + H2O + H(+). Its function is as follows. Cytochromes P450 are a group of heme-thiolate monooxygenases. In liver microsomes, this enzyme is involved in an NADPH-dependent electron transport pathway. It oxidizes a variety of structurally unrelated compounds, including steroids, fatty acids, and xenobiotics. This is Cytochrome P450 2C41 (CYP2C41) from Canis lupus familiaris (Dog).